The chain runs to 119 residues: Holo-[acyl-carrier-protein] synthase (119 aa).

The Mg(2+) site is built by Asp-8 and Glu-59.

It belongs to the P-Pant transferase superfamily. AcpS family. The cofactor is Mg(2+).

It localises to the cytoplasm. The enzyme catalyses apo-[ACP] + CoA = holo-[ACP] + adenosine 3',5'-bisphosphate + H(+). Its function is as follows. Transfers the 4'-phosphopantetheine moiety from coenzyme A to a Ser of acyl-carrier-protein. The chain is Holo-[acyl-carrier-protein] synthase from Streptococcus agalactiae serotype Ia (strain ATCC 27591 / A909 / CDC SS700).